A 281-amino-acid polypeptide reads, in one-letter code: 2,3,4,5-tetrahydropyridine-2,6-dicarboxylate N-succinyltransferase (281 aa).

Substrate is bound by residues Arg108 and Asp145.

The protein belongs to the transferase hexapeptide repeat family. Homotrimer.

The protein localises to the cytoplasm. It catalyses the reaction (S)-2,3,4,5-tetrahydrodipicolinate + succinyl-CoA + H2O = (S)-2-succinylamino-6-oxoheptanedioate + CoA. The protein operates within amino-acid biosynthesis; L-lysine biosynthesis via DAP pathway; LL-2,6-diaminopimelate from (S)-tetrahydrodipicolinate (succinylase route): step 1/3. The polypeptide is 2,3,4,5-tetrahydropyridine-2,6-dicarboxylate N-succinyltransferase (Parvibaculum lavamentivorans (strain DS-1 / DSM 13023 / NCIMB 13966)).